The primary structure comprises 353 residues: Methylthioribose-1-phosphate isomerase (353 aa).

Substrate-binding positions include 51 to 53 (RGA), Arg94, and Gln199. Asp240 serves as the catalytic Proton donor. Residue 250–251 (NK) coordinates substrate.

It belongs to the eIF-2B alpha/beta/delta subunits family. MtnA subfamily. As to quaternary structure, homodimer.

The enzyme catalyses 5-(methylsulfanyl)-alpha-D-ribose 1-phosphate = 5-(methylsulfanyl)-D-ribulose 1-phosphate. It functions in the pathway amino-acid biosynthesis; L-methionine biosynthesis via salvage pathway; L-methionine from S-methyl-5-thio-alpha-D-ribose 1-phosphate: step 1/6. In terms of biological role, catalyzes the interconversion of methylthioribose-1-phosphate (MTR-1-P) into methylthioribulose-1-phosphate (MTRu-1-P). The sequence is that of Methylthioribose-1-phosphate isomerase from Bacillus velezensis (strain DSM 23117 / BGSC 10A6 / LMG 26770 / FZB42) (Bacillus amyloliquefaciens subsp. plantarum).